The following is a 274-amino-acid chain: Small nuclear ribonucleoprotein-associated protein B (274 aa).

Residues 5–85 enclose the Sm domain; sequence PKSSKMLQYI…VVSMSVEAPP (81 aa). Positions 148–274 are disordered; it reads PGGGVPPPMG…PMGRGGFQRK (127 aa). Repeat 1 spans residues 162 to 171; sequence PPQGFPPGGP. The 6 X 10 AA repeats of P-P-Q-G-F-P-P-G-G-P stretch occupies residues 162-265; sequence PPQGFPPGGP…PPQGFPPGGP (104 aa). Over residues 173 to 187 the composition is skewed to low complexity; that stretch reads PQGAFNNNPNNNNGG. 5 repeat units span residues 188-197, 204-213, 225-234, 241-250, and 256-265. A compositionally biased stretch (low complexity) spans 216–226; sequence GPNLNNGNMPP. The segment covering 265-274 has biased composition (gly residues); that stretch reads PMGRGGFQRK.

The protein belongs to the snRNP SmB/SmN family.

The protein resides in the cytoplasm. The protein localises to the cytosol. It localises to the nucleus. Functionally, plays a role in pre-mRNA splicing as a core component of the spliceosomal U1, U2, U4 and U5 small nuclear ribonucleoproteins (snRNPs), the building blocks of the spliceosome. In Dictyostelium discoideum (Social amoeba), this protein is Small nuclear ribonucleoprotein-associated protein B (snrpb).